The following is a 122-amino-acid chain: Large ribosomal subunit protein uL14 (122 aa).

It belongs to the universal ribosomal protein uL14 family. Part of the 50S ribosomal subunit. Forms a cluster with proteins L3 and L19. In the 70S ribosome, L14 and L19 interact and together make contacts with the 16S rRNA in bridges B5 and B8.

Functionally, binds to 23S rRNA. Forms part of two intersubunit bridges in the 70S ribosome. This chain is Large ribosomal subunit protein uL14, found in Prosthecochloris aestuarii (strain DSM 271 / SK 413).